Here is a 417-residue protein sequence, read N- to C-terminus: Indole-3-pyruvate monooxygenase YUCCA6 (417 aa).

36–41 (GAGPSG) is a binding site for FAD. NADP(+) is bound at residue 204 to 209 (GCGNSG).

The protein belongs to the FMO family. It depends on FAD as a cofactor. As to expression, highly expressed in roots but modestly expressed in the cauline leaves and flowers. Expressed in anthers.

It is found in the cytoplasm. The enzyme catalyses indole-3-pyruvate + NADPH + O2 + H(+) = (indol-3-yl)acetate + CO2 + NADP(+) + H2O. It functions in the pathway plant hormone metabolism; auxin biosynthesis. Functionally, involved in auxin biosynthesis via the indole-3-pyruvic acid (IPA) pathway. Also able to convert in vitro phenyl pyruvate (PPA) to phenyl acetic acid (PAA). Required for the formation of floral organs and vascular tissues. Belongs to the set of redundant YUCCA genes probably responsible for auxin biosynthesis in shoots. The chain is Indole-3-pyruvate monooxygenase YUCCA6 (YUC6) from Arabidopsis thaliana (Mouse-ear cress).